Consider the following 301-residue polypeptide: ATP synthase gamma chain (301 aa).

The protein belongs to the ATPase gamma chain family. In terms of assembly, F-type ATPases have 2 components, CF(1) - the catalytic core - and CF(0) - the membrane proton channel. CF(1) has five subunits: alpha(3), beta(3), gamma(1), delta(1), epsilon(1). CF(0) has three main subunits: a, b and c.

Its subcellular location is the cell inner membrane. Its function is as follows. Produces ATP from ADP in the presence of a proton gradient across the membrane. The gamma chain is believed to be important in regulating ATPase activity and the flow of protons through the CF(0) complex. This is ATP synthase gamma chain from Bordetella petrii (strain ATCC BAA-461 / DSM 12804 / CCUG 43448).